Reading from the N-terminus, the 459-residue chain is Argininosuccinate lyase (459 aa).

It belongs to the lyase 1 family. Argininosuccinate lyase subfamily.

The protein localises to the cytoplasm. It catalyses the reaction 2-(N(omega)-L-arginino)succinate = fumarate + L-arginine. Its pathway is amino-acid biosynthesis; L-arginine biosynthesis; L-arginine from L-ornithine and carbamoyl phosphate: step 3/3. In Lactococcus lactis subsp. lactis (strain IL1403) (Streptococcus lactis), this protein is Argininosuccinate lyase.